Consider the following 192-residue polypeptide: MTYRTLCILAFTALISACSSRPTGPTTPPPESVSAISKWETSGRVGIRTKNDAVSGNFNWQKDPKTFALSIVGPFGQGATHLNQSNDGVVTLAYEDTVVTGNNPETLLQQELGWEFPVNQVTYWIRGLAYPNSAAKISKDPDSQLPNKIEQDGWLITYSNFTKVDGLSLPQKMQVSNPPFRVNLIINQWTIQ.

An N-terminal signal peptide occupies residues 1–17 (MTYRTLCILAFTALISA). Residue Cys-18 is the site of N-palmitoyl cysteine attachment. Residue Cys-18 is the site of S-diacylglycerol cysteine attachment.

The protein belongs to the LolB family. Monomer.

The protein resides in the cell outer membrane. Its function is as follows. Plays a critical role in the incorporation of lipoproteins in the outer membrane after they are released by the LolA protein. The chain is Outer-membrane lipoprotein LolB from Marinomonas sp. (strain MWYL1).